The chain runs to 132 residues: ATP synthase epsilon chain (132 aa).

It belongs to the ATPase epsilon chain family. As to quaternary structure, F-type ATPases have 2 components, CF(1) - the catalytic core - and CF(0) - the membrane proton channel. CF(1) has five subunits: alpha(3), beta(3), gamma(1), delta(1), epsilon(1). CF(0) has three main subunits: a, b and c.

The protein localises to the cell membrane. Functionally, produces ATP from ADP in the presence of a proton gradient across the membrane. This is ATP synthase epsilon chain (atpC) from Bacillus sp. (strain PS3).